Here is a 496-residue protein sequence, read N- to C-terminus: Galactan beta-1,4-galactosyltransferase GALS1 (496 aa).

Residues 22–42 (IIATLLALSLVMIVWNLPPYY) form a helical membrane-spanning segment. In terms of domain architecture, GT92 spans 232 to 464 (DYLYCGSSLY…AKKKVTLYNK (233 aa)).

This sequence belongs to the glycosyltransferase 92 family. In terms of tissue distribution, expressed in root vasculature, mature leaves, trichomes, flowers, siliques and seeds.

Its subcellular location is the golgi apparatus membrane. Functionally, involved in the biosynthesis of beta-1,4-galactan. Can transfer galactose residues from UDP-galactose to beta-1,4-galactopentaose in vitro. Forms specifically beta-1,4-galactosyl linkages and can add successive beta-1,4-galactosyl residues to the acceptor. Beta-1,4-galactans are abundant polysaccharides in plant cell walls and are found as side-chain of rhamnogalacturonan I, which is a major component of pectin. The polypeptide is Galactan beta-1,4-galactosyltransferase GALS1 (Arabidopsis thaliana (Mouse-ear cress)).